The sequence spans 1742 residues: NACHT and WD repeat domain-containing protein 2 (1742 aa).

LRR repeat units follow at residues 386–410, 677–698, 724–747, 883–906, and 925–953; these read FYEYKCESLNILHKYILPSKTGHIN, LEDVLALDNSVMNELNENTRPS, VKNVTLLVWANRHLQLIAQKLYLQ, YSQEKELKFLASTLRSIRNKVIAF, and LPKLRHLLLECDKDGPKYCSIVPLHSSMD. The region spanning 410 to 737 is the NACHT domain; the sequence is NPLVVYGGPC…TLLVWANRHL (328 aa). WD repeat units follow at residues 963-1004, 1007-1046, 1140-1179, 1229-1271, 1272-1311, 1314-1353, 1355-1394, 1396-1434, 1476-1516, 1522-1561, and 1614-1653; these read LASS…LLRQ, TAQSVILGMKLSSDEKYLVVATTNNTLLIYDNVNSCLLSE, FSGGFVKFLLILDTAQEMVMVDSEGSLSVWNTEDISNPQL, RHNE…ASLQ, ESSGTIVKLVKSSHHNMLLSLSTSGVLSIWDIDIITAMSN, KTGKPIQSLVLPARGEIIYSLDGSDCVHKWNFSSGFIEAV, KHEGIVEHCVLTSTGDLMVTSDDKSSQYVWHTSSGENLFR, NGQRISQLLITHNDQFVVSLCEENASRVWRLATGHRVCN, EDGI…ICRR, NFLKNLEDFEISPNGKLGIISRGDENINVLDLHSGKLRVV, and SLYKTPTFLALSQRHLNIIVGFDDGSIGIYTVVDRVDAAL. A disordered region spans residues 1702 to 1721; sequence PITVSDSSESNEATPSKKHN. Residues 1703 to 1715 are compositionally biased toward polar residues; that stretch reads ITVSDSSESNEAT.

The protein is NACHT and WD repeat domain-containing protein 2 (Nwd2) of Mus musculus (Mouse).